We begin with the raw amino-acid sequence, 147 residues long: Lysozyme C (147 aa).

The N-terminal stretch at 1 to 18 (MRSLLILVLCFLPLAALG) is a signal peptide. The 129-residue stretch at 19 to 147 (KVYGRCELAA…VHAWIRGCRL (129 aa)) folds into the C-type lysozyme domain. Cystine bridges form between C24–C145, C48–C133, C82–C98, and C94–C112.

Belongs to the glycosyl hydrolase 22 family. As to quaternary structure, monomer.

It localises to the secreted. The enzyme catalyses Hydrolysis of (1-&gt;4)-beta-linkages between N-acetylmuramic acid and N-acetyl-D-glucosamine residues in a peptidoglycan and between N-acetyl-D-glucosamine residues in chitodextrins.. Functionally, lysozymes have primarily a bacteriolytic function; those in tissues and body fluids are associated with the monocyte-macrophage system and enhance the activity of immunoagents. This is Lysozyme C (LYZ) from Meleagris gallopavo (Wild turkey).